The sequence spans 217 residues: MGQKVCAHGFRVGPTLIKGWDSVLYAEKHYKTLFIQDLKIRDLINKGFNQAQVSRVLIERPSNKSIIININAKKPNIIIGRNGSEIDKIKKAIEKMTSLKEVYINIHEVRKFNIDAAIVAQTIALQLEKRVSFRKAMKTAIQASFKQGGQGIRVSCSGRLGGAEIARTEWYIEGRMPLHTLRADIDYSTAEAITTYGIIGVKVWIYKGEYTENKRYN.

A KH type-2 domain is found at Ile-40–Arg-110.

It belongs to the universal ribosomal protein uS3 family. Part of the 30S ribosomal subunit. Forms a tight complex with proteins S10 and S14.

In terms of biological role, binds the lower part of the 30S subunit head. Binds mRNA in the 70S ribosome, positioning it for translation. The protein is Small ribosomal subunit protein uS3 of Rickettsia felis (strain ATCC VR-1525 / URRWXCal2) (Rickettsia azadi).